Consider the following 629-residue polypeptide: tRNA uridine 5-carboxymethylaminomethyl modification enzyme MnmG (629 aa).

An FAD-binding site is contributed by 13 to 18 (GGGHAG). 273 to 287 (GPRYCPSIEDKIMRF) serves as a coordination point for NAD(+).

The protein belongs to the MnmG family. As to quaternary structure, homodimer. Heterotetramer of two MnmE and two MnmG subunits. The cofactor is FAD.

Its subcellular location is the cytoplasm. Its function is as follows. NAD-binding protein involved in the addition of a carboxymethylaminomethyl (cmnm) group at the wobble position (U34) of certain tRNAs, forming tRNA-cmnm(5)s(2)U34. In Tolumonas auensis (strain DSM 9187 / NBRC 110442 / TA 4), this protein is tRNA uridine 5-carboxymethylaminomethyl modification enzyme MnmG.